The chain runs to 219 residues: uncharacterized protein (219 aa).

A compositionally biased stretch (low complexity) spans 1 to 17; it reads MIINNQNSPQSINTPSS. Residues 1 to 31 form a disordered region; the sequence is MIINNQNSPQSINTPSSVSSRQHINKSKKKK. 2 consecutive transmembrane segments (helical) span residues 49–69 and 83–105; these read SLAT…LVCK and LVYR…SYIG. The interval 135–219 is disordered; sequence NHRSPIPLTN…NSDLEIPIPI (85 aa). The span at 144 to 212 shows a compositional bias: low complexity; that stretch reads NLNNNNNNNN…SNNNNDNNSD (69 aa).

It is found in the membrane. This is an uncharacterized protein from Dictyostelium discoideum (Social amoeba).